The primary structure comprises 351 residues: Uroporphyrinogen decarboxylase (351 aa).

Substrate is bound by residues 25-29 (RQAGR), D74, Y151, S206, and H325.

This sequence belongs to the uroporphyrinogen decarboxylase family. As to quaternary structure, homodimer.

Its subcellular location is the cytoplasm. The enzyme catalyses uroporphyrinogen III + 4 H(+) = coproporphyrinogen III + 4 CO2. It participates in porphyrin-containing compound metabolism; protoporphyrin-IX biosynthesis; coproporphyrinogen-III from 5-aminolevulinate: step 4/4. In terms of biological role, catalyzes the decarboxylation of four acetate groups of uroporphyrinogen-III to yield coproporphyrinogen-III. In Chlorobium luteolum (strain DSM 273 / BCRC 81028 / 2530) (Pelodictyon luteolum), this protein is Uroporphyrinogen decarboxylase.